The following is a 193-amino-acid chain: Probable GTP-binding protein EngB (193 aa).

The region spanning 22 to 193 (MYPEISFIGR…ELWQIIEDLL (172 aa)) is the EngB-type G domain. Residues 30-37 (GRSNVGKS), 57-61 (GKTRT), 75-78 (DLPG), 142-145 (TKMD), and 174-176 (FSS) contribute to the GTP site. Mg(2+)-binding residues include Ser37 and Thr59.

This sequence belongs to the TRAFAC class TrmE-Era-EngA-EngB-Septin-like GTPase superfamily. EngB GTPase family. It depends on Mg(2+) as a cofactor.

In terms of biological role, necessary for normal cell division and for the maintenance of normal septation. This is Probable GTP-binding protein EngB from Natranaerobius thermophilus (strain ATCC BAA-1301 / DSM 18059 / JW/NM-WN-LF).